Here is a 448-residue protein sequence, read N- to C-terminus: Chromosomal replication initiator protein DnaA (448 aa).

A domain I, interacts with DnaA modulators region spans residues 1 to 73 (MNTHLTETWE…VNALKLLTSK (73 aa)). The interval 73-109 (KKYNIDFIVTTEEKIEENQKNHNNEKSNIVVNDEMST) is domain II. Positions 110 to 326 (MLNPKYTFDS…GALIRIVAFS (217 aa)) are domain III, AAA+ region. The ATP site is built by G154, G156, K157, and T158. A domain IV, binds dsDNA region spans residues 327–448 (SLTNKEISID…KELNKRINQK (122 aa)).

It belongs to the DnaA family. Oligomerizes as a right-handed, spiral filament on DNA at oriC.

The protein localises to the cytoplasm. Functionally, plays an essential role in the initiation and regulation of chromosomal replication. ATP-DnaA binds to the origin of replication (oriC) to initiate formation of the DNA replication initiation complex once per cell cycle. Binds the DnaA box (a 9 base pair repeat at the origin) and separates the double-stranded (ds)DNA. Forms a right-handed helical filament on oriC DNA; dsDNA binds to the exterior of the filament while single-stranded (ss)DNA is stabiized in the filament's interior. The ATP-DnaA-oriC complex binds and stabilizes one strand of the AT-rich DNA unwinding element (DUE), permitting loading of DNA polymerase. After initiation quickly degrades to an ADP-DnaA complex that is not apt for DNA replication. Binds acidic phospholipids. This chain is Chromosomal replication initiator protein DnaA, found in Clostridium botulinum (strain ATCC 19397 / Type A).